Consider the following 175-residue polypeptide: tRNA (cytidine(56)-2'-O)-methyltransferase (175 aa).

Leu-83 lines the S-adenosyl-L-methionine pocket.

This sequence belongs to the aTrm56 family. In terms of assembly, homodimer.

It localises to the cytoplasm. The catalysed reaction is cytidine(56) in tRNA + S-adenosyl-L-methionine = 2'-O-methylcytidine(56) in tRNA + S-adenosyl-L-homocysteine + H(+). Specifically catalyzes the AdoMet-dependent 2'-O-ribose methylation of cytidine at position 56 in tRNAs. This Methanosphaera stadtmanae (strain ATCC 43021 / DSM 3091 / JCM 11832 / MCB-3) protein is tRNA (cytidine(56)-2'-O)-methyltransferase.